Here is a 166-residue protein sequence, read N- to C-terminus: Lutropin subunit beta (166 aa).

Positions 1 to 21 (MGGAQVLLLLTLLGTPLVTHG) are cleaved as a signal peptide. 6 cysteine pairs are disulfide-bonded: cysteine 56–cysteine 104, cysteine 70–cysteine 119, cysteine 73–cysteine 157, cysteine 81–cysteine 135, cysteine 85–cysteine 137, and cysteine 140–cysteine 147. N-linked (GlcNAc...) asparagine glycosylation occurs at asparagine 60.

The protein belongs to the glycoprotein hormones subunit beta family. As to quaternary structure, heterodimer of a common alpha chain and a unique beta chain which confers biological specificity to thyrotropin, lutropin, follitropin and gonadotropin.

It localises to the secreted. Promotes spermatogenesis and ovulation by stimulating the testes and ovaries to synthesize steroids. The protein is Lutropin subunit beta (LHB) of Coturnix japonica (Japanese quail).